A 347-amino-acid chain; its full sequence is N-acetyl-gamma-glutamyl-phosphate reductase (347 aa).

Residue cysteine 153 is part of the active site.

It belongs to the NAGSA dehydrogenase family. Type 1 subfamily.

The protein localises to the cytoplasm. The catalysed reaction is N-acetyl-L-glutamate 5-semialdehyde + phosphate + NADP(+) = N-acetyl-L-glutamyl 5-phosphate + NADPH + H(+). The protein operates within amino-acid biosynthesis; L-arginine biosynthesis; N(2)-acetyl-L-ornithine from L-glutamate: step 3/4. Catalyzes the NADPH-dependent reduction of N-acetyl-5-glutamyl phosphate to yield N-acetyl-L-glutamate 5-semialdehyde. This Mycobacterium avium (strain 104) protein is N-acetyl-gamma-glutamyl-phosphate reductase.